The sequence spans 101 residues: Small ribosomal subunit protein uS14 (101 aa).

Belongs to the universal ribosomal protein uS14 family. In terms of assembly, part of the 30S ribosomal subunit. Contacts proteins S3 and S10.

In terms of biological role, binds 16S rRNA, required for the assembly of 30S particles and may also be responsible for determining the conformation of the 16S rRNA at the A site. In Neisseria gonorrhoeae (strain ATCC 700825 / FA 1090), this protein is Small ribosomal subunit protein uS14.